The sequence spans 224 residues: Ribonuclease HII (224 aa).

The 211-residue stretch at 7–217 (STIMGIDEAG…SNAVIADCLQ (211 aa)) folds into the RNase H type-2 domain. D13, E14, and D111 together coordinate a divalent metal cation.

This sequence belongs to the RNase HII family. It depends on Mn(2+) as a cofactor. Requires Mg(2+) as cofactor.

Its subcellular location is the cytoplasm. It catalyses the reaction Endonucleolytic cleavage to 5'-phosphomonoester.. Functionally, endonuclease that specifically degrades the RNA of RNA-DNA hybrids. This Methanocella arvoryzae (strain DSM 22066 / NBRC 105507 / MRE50) protein is Ribonuclease HII.